A 359-amino-acid polypeptide reads, in one-letter code: Peptide chain release factor 1 (359 aa).

At Gln236 the chain carries N5-methylglutamine.

It belongs to the prokaryotic/mitochondrial release factor family. Post-translationally, methylated by PrmC. Methylation increases the termination efficiency of RF1.

It localises to the cytoplasm. Its function is as follows. Peptide chain release factor 1 directs the termination of translation in response to the peptide chain termination codons UAG and UAA. The sequence is that of Peptide chain release factor 1 from Streptococcus agalactiae serotype V (strain ATCC BAA-611 / 2603 V/R).